The following is a 752-amino-acid chain: Ribosomal protein S6 kinase 2 alpha (752 aa).

Residues phenylalanine 80–tyrosine 339 form the Protein kinase 1 domain. Residues leucine 86–valine 94 and lysine 112 contribute to the ATP site. The active-site Proton acceptor is the aspartate 205. Serine 239 carries the post-translational modification Phosphoserine. In terms of domain architecture, AGC-kinase C-terminal spans serine 340–lysine 409. At threonine 377 the chain carries Phosphothreonine. At serine 381 the chain carries Phosphoserine. Serine 398 carries the phosphoserine; by autocatalysis modification. In terms of domain architecture, Protein kinase 2 spans tyrosine 435–isoleucine 692. ATP contacts are provided by residues isoleucine 441 to cysteine 449 and lysine 464. The Proton acceptor role is filled by aspartate 552. At threonine 590 the chain carries Phosphothreonine. Serine 749 is subject to Phosphoserine.

This sequence belongs to the protein kinase superfamily. AGC Ser/Thr protein kinase family. S6 kinase subfamily. Mg(2+) is required as a cofactor. Autophosphorylated on Ser-398, as part of the activation process. In terms of tissue distribution, small and large intestine, spleen, stomach, and bursa, and to a lesser extent lung and kidney.

It carries out the reaction L-seryl-[protein] + ATP = O-phospho-L-seryl-[protein] + ADP + H(+). It catalyses the reaction L-threonyl-[protein] + ATP = O-phospho-L-threonyl-[protein] + ADP + H(+). With respect to regulation, activated by multiple phosphorylations on threonine and serine residues. Its function is as follows. Serine/threonine kinase that may play a role in mediating the growth-factor and stress induced activation of transcription. In Gallus gallus (Chicken), this protein is Ribosomal protein S6 kinase 2 alpha (RPS6KA).